Consider the following 312-residue polypeptide: Methionyl-tRNA formyltransferase (312 aa).

110–113 (SLLP) contributes to the (6S)-5,6,7,8-tetrahydrofolate binding site.

This sequence belongs to the Fmt family.

It catalyses the reaction L-methionyl-tRNA(fMet) + (6R)-10-formyltetrahydrofolate = N-formyl-L-methionyl-tRNA(fMet) + (6S)-5,6,7,8-tetrahydrofolate + H(+). Attaches a formyl group to the free amino group of methionyl-tRNA(fMet). The formyl group appears to play a dual role in the initiator identity of N-formylmethionyl-tRNA by promoting its recognition by IF2 and preventing the misappropriation of this tRNA by the elongation apparatus. The polypeptide is Methionyl-tRNA formyltransferase (Streptococcus suis (strain 05ZYH33)).